The primary structure comprises 248 residues: 2,3-bisphosphoglycerate-dependent phosphoglycerate mutase (248 aa).

Residues Arg-8–Asn-15, Thr-21–Gly-22, Arg-60, Glu-87–Tyr-90, Lys-98, Arg-114–Arg-115, and Gly-183–Asn-184 contribute to the substrate site. Catalysis depends on His-9, which acts as the Tele-phosphohistidine intermediate. Glu-87 serves as the catalytic Proton donor/acceptor.

The protein belongs to the phosphoglycerate mutase family. BPG-dependent PGAM subfamily.

It catalyses the reaction (2R)-2-phosphoglycerate = (2R)-3-phosphoglycerate. The protein operates within carbohydrate degradation; glycolysis; pyruvate from D-glyceraldehyde 3-phosphate: step 3/5. Its function is as follows. Catalyzes the interconversion of 2-phosphoglycerate and 3-phosphoglycerate. This chain is 2,3-bisphosphoglycerate-dependent phosphoglycerate mutase, found in Parabacteroides distasonis (strain ATCC 8503 / DSM 20701 / CIP 104284 / JCM 5825 / NCTC 11152).